The chain runs to 114 residues: Cytochrome c oxidase assembly protein cox16, mitochondrial (114 aa).

The helical transmembrane segment at 29-49 (PFLLFGLPFMSVIVAGSFILT) threads the bilayer.

The protein belongs to the COX16 family.

It localises to the mitochondrion inner membrane. Required for the assembly of the mitochondrial respiratory chain complex IV (CIV), also known as cytochrome c oxidase. May participate in merging the COX1 and COX2 assembly lines. This chain is Cytochrome c oxidase assembly protein cox16, mitochondrial (cox-9), found in Neurospora crassa (strain ATCC 24698 / 74-OR23-1A / CBS 708.71 / DSM 1257 / FGSC 987).